The chain runs to 720 residues: Probable GTPase-activating protein GYL1 (720 aa).

M1 is subject to N-acetylmethionine. Over residues 1-52 (MNSNEDIHEERIEVPRTPHQTQPEKDSDRIALRDEISVPEGDEKAYSDEKVE) the composition is skewed to basic and acidic residues. The disordered stretch occupies residues 1–132 (MNSNEDIHEE…TSPPLPPRAD (132 aa)). The residue at position 17 (T17) is a Phosphothreonine. The residue at position 37 (S37) is a Phosphoserine. Over residues 54-66 (ATTNASSNFGSNE) the composition is skewed to polar residues. S73 carries the post-translational modification Phosphoserine. The span at 95 to 108 (SKTILPSDDLSQQL) shows a compositional bias: polar residues. A compositionally biased stretch (basic and acidic residues) spans 111-120 (EESKVEEALK). Position 139 is a phosphoserine (S139). 2 disordered regions span residues 144 to 164 (SLPPVLAGNKNDQAPLDRPQL) and 179 to 210 (APHGNATPSKSPTSAVGNSSSSTPPTLPPRRI). The segment covering 184 to 196 (ATPSKSPTSAVGN) has biased composition (polar residues). Residues 297–477 (GIPAAYRLVV…RIGDMVFLEG (181 aa)) form the Rab-GAP TBC domain. A Glycyl lysine isopeptide (Lys-Gly) (interchain with G-Cter in SUMO) cross-link involves residue K498. A coiled-coil region spans residues 572–696 (QYKSITEKNL…EIKTANKNGT (125 aa)).

Belongs to the GYP5 family. Interacts with GYP5 and RVS167. Is part of SEC4-containing complexes.

It localises to the cytoplasm. The protein localises to the bud. The protein resides in the bud neck. In terms of biological role, probable GTPase-activating protein which stimulates the GTP hydrolysis rate by GYP5 of YPT1 and SEC4. Involved in ER to Golgi trafficking and polarized exocytosis. In Saccharomyces cerevisiae (strain ATCC 204508 / S288c) (Baker's yeast), this protein is Probable GTPase-activating protein GYL1 (GYL1).